Consider the following 150-residue polypeptide: Arginine repressor (150 aa).

This sequence belongs to the ArgR family.

Its subcellular location is the cytoplasm. It participates in amino-acid biosynthesis; L-arginine biosynthesis [regulation]. Its function is as follows. Regulates arginine biosynthesis genes. This chain is Arginine repressor, found in Finegoldia magna (strain ATCC 29328 / DSM 20472 / WAL 2508) (Peptostreptococcus magnus).